A 388-amino-acid chain; its full sequence is Chorismate synthase (388 aa).

NADP(+) is bound by residues arginine 39 and arginine 45. Residues 132–134 (RSS), 251–252 (NA), glycine 296, 311–315 (KPIPT), and arginine 337 contribute to the FMN site.

The protein belongs to the chorismate synthase family. As to quaternary structure, homotetramer. FMNH2 serves as cofactor.

It carries out the reaction 5-O-(1-carboxyvinyl)-3-phosphoshikimate = chorismate + phosphate. It functions in the pathway metabolic intermediate biosynthesis; chorismate biosynthesis; chorismate from D-erythrose 4-phosphate and phosphoenolpyruvate: step 7/7. In terms of biological role, catalyzes the anti-1,4-elimination of the C-3 phosphate and the C-6 proR hydrogen from 5-enolpyruvylshikimate-3-phosphate (EPSP) to yield chorismate, which is the branch point compound that serves as the starting substrate for the three terminal pathways of aromatic amino acid biosynthesis. This reaction introduces a second double bond into the aromatic ring system. The polypeptide is Chorismate synthase (Staphylococcus carnosus (strain TM300)).